A 294-amino-acid chain; its full sequence is 4-diphosphocytidyl-2-C-methyl-D-erythritol kinase (294 aa).

Residue K19 is part of the active site. Residue 106-116 (PVASGIGGGSA) coordinates ATP. D148 is a catalytic residue.

This sequence belongs to the GHMP kinase family. IspE subfamily.

It catalyses the reaction 4-CDP-2-C-methyl-D-erythritol + ATP = 4-CDP-2-C-methyl-D-erythritol 2-phosphate + ADP + H(+). It functions in the pathway isoprenoid biosynthesis; isopentenyl diphosphate biosynthesis via DXP pathway; isopentenyl diphosphate from 1-deoxy-D-xylulose 5-phosphate: step 3/6. Its function is as follows. Catalyzes the phosphorylation of the position 2 hydroxy group of 4-diphosphocytidyl-2C-methyl-D-erythritol. The sequence is that of 4-diphosphocytidyl-2-C-methyl-D-erythritol kinase from Rhizobium etli (strain ATCC 51251 / DSM 11541 / JCM 21823 / NBRC 15573 / CFN 42).